A 453-amino-acid chain; its full sequence is Glutamyl-tRNA reductase (453 aa).

Substrate-binding positions include 50-53, Ser-110, 115-117, and Gln-121; these read TCNR and EPQ. The Nucleophile role is filled by Cys-51. 190 to 195 is an NADP(+) binding site; sequence GAGEMA. Basic and acidic residues predominate over residues 423–436; that stretch reads REKVPTDAHADRKP. Residues 423-453 form a disordered region; it reads REKVPTDAHADRKPPNFAETSDDFDVTDASE. Acidic residues predominate over residues 442–453; sequence TSDDFDVTDASE.

Belongs to the glutamyl-tRNA reductase family. Homodimer.

It catalyses the reaction (S)-4-amino-5-oxopentanoate + tRNA(Glu) + NADP(+) = L-glutamyl-tRNA(Glu) + NADPH + H(+). It participates in porphyrin-containing compound metabolism; protoporphyrin-IX biosynthesis; 5-aminolevulinate from L-glutamyl-tRNA(Glu): step 1/2. Its function is as follows. Catalyzes the NADPH-dependent reduction of glutamyl-tRNA(Glu) to glutamate 1-semialdehyde (GSA). This chain is Glutamyl-tRNA reductase, found in Solidesulfovibrio magneticus (strain ATCC 700980 / DSM 13731 / RS-1) (Desulfovibrio magneticus).